Reading from the N-terminus, the 141-residue chain is Hemoglobin subunit alpha (141 aa).

The region spanning 1–141 (VLSAADKGHV…VSTVLTSKYR (141 aa)) is the Globin domain. Position 3 is a phosphoserine (Ser3). Residues Lys7 and Lys11 each carry the N6-succinyllysine modification. N6-acetyllysine; alternate is present on Lys16. N6-succinyllysine; alternate is present on Lys16. Phosphotyrosine is present on Tyr24. Phosphoserine is present on Ser35. Lys40 is subject to N6-succinyllysine. Ser49 carries the phosphoserine modification. His58 provides a ligand contact to O2. Residue His87 participates in heme b binding. Ser102 carries the post-translational modification Phosphoserine. Residue Thr108 is modified to Phosphothreonine. The residue at position 124 (Ser124) is a Phosphoserine. A phosphothreonine mark is found at Thr134 and Thr137. Ser138 carries the post-translational modification Phosphoserine.

The protein belongs to the globin family. In terms of assembly, heterotetramer of two alpha chains and two beta chains. In terms of tissue distribution, red blood cells.

Its function is as follows. Involved in oxygen transport from the lung to the various peripheral tissues. Functionally, hemopressin acts as an antagonist peptide of the cannabinoid receptor CNR1. Hemopressin-binding efficiently blocks cannabinoid receptor CNR1 and subsequent signaling. This chain is Hemoglobin subunit alpha (HBA), found in Macropus giganteus (Eastern gray kangaroo).